The following is a 124-amino-acid chain: MHELSYATSILNSILEVLKEQESLGKKVTGVSEINLEIGDLTLISFEQLKFAFEVIAENTLCKNAVLNTEMIKPKISCLNCGFLGILEVTDELEAKCPKCGSMNVRIKGGKEFNIKNAIIEFDD.

His2 is a binding site for Ni(2+). Zn(2+) contacts are provided by Cys78, Cys81, Cys97, and Cys100.

It belongs to the HypA/HybF family.

Involved in the maturation of [NiFe] hydrogenases. Required for nickel insertion into the metal center of the hydrogenase. The protein is Hydrogenase maturation factor HypA of Methanococcus vannielii (strain ATCC 35089 / DSM 1224 / JCM 13029 / OCM 148 / SB).